Consider the following 341-residue polypeptide: KRR1 small subunit processome component homolog (341 aa).

In terms of domain architecture, KH spans 126 to 194; sequence DIIKIGNLVH…VRDIVLETMN (69 aa). Residues 230–244 show a composition bias toward basic residues; sequence KNKNISKRKQPKSRK. The disordered stretch occupies residues 230 to 327; sequence KNKNISKRKQ…RPSEASKVDV (98 aa). The stretch at 271 to 341 forms a coiled coil; sequence FLNKEQKQAK…AKLLKANKQK (71 aa). Composition is skewed to basic and acidic residues over residues 272-303 and 313-327; these read LNKEQKQAKRQQERVAKQAEAAKKQDERRNKD and EQNRKRPSEASKVDV.

This sequence belongs to the KRR1 family. Monomer. Component of the ribosomal small subunit (SSU) processome.

Its subcellular location is the nucleus. It localises to the nucleolus. Its function is as follows. Required for 40S ribosome biogenesis. Involved in nucleolar processing of pre-18S ribosomal RNA and ribosome assembly. Binds to RNA. Required for female germline development, cell viability during eye development and for survival of dividing cells and epithelial cells during early wing disk development. The polypeptide is KRR1 small subunit processome component homolog (Drosophila grimshawi (Hawaiian fruit fly)).